The following is a 4466-amino-acid chain: Dynein beta chain, ciliary (4466 aa).

A stem region spans residues 1 to 1813 (MGDVVDARLD…YANICDAQFK (1813 aa)). 154 to 161 (AGQVKGKT) contacts ATP. Coiled coils occupy residues 482 to 502 (QEFLEDYEEFEKKVFDLDRRL), 627 to 643 (QKYEEMLNLLNKYEQKV), 734 to 805 (VLEV…WTKQ), 1036 to 1056 (TLDQFKEQVDTYEKIYSEADE), 1306 to 1337 (WLEINVEQMEMDCKKFAKDIRSLDKEMRAWDA), and 1443 to 1468 (LLKSNEELIETLEDNQVQLQNLMTSK). AAA regions lie at residues 1814–2035 (YSYE…VLVV), 2095–2316 (KVVK…IRFK), 2422–2669 (ELDP…VFQG), and 2767–3016 (TYNE…ERRY). Residues 1852–1859 (GPAGTGKT), 2133–2140 (GNAGTGKS), 2460–2467 (GNAGLGKS), and 2805–2812 (GVGGSGKQ) contribute to the ATP site. Coiled-coil stretches lie at residues 3033-3134 (SLLA…AKAE), 3263-3325 (EPKR…SRTI), and 3573-3642 (QERP…EEAK). Positions 3033–3325 (SLLAMKSKEL…QEAEATSRTI (293 aa)) are stalk. 2 AAA regions span residues 3409 to 3636 (LTDD…EISV) and 3846 to 4072 (VRNF…VLYN).

This sequence belongs to the dynein heavy chain family. As to quaternary structure, consists of at least two heavy chains (alpha and beta), three intermediate chains and several light chains.

It is found in the cell projection. It localises to the cilium. The protein resides in the flagellum. The protein localises to the cytoplasm. Its subcellular location is the cytoskeleton. It is found in the flagellum axoneme. In terms of biological role, force generating protein of eukaryotic cilia and flagella. Produces force towards the minus ends of microtubules. Dynein has ATPase activity; the force-producing power stroke is thought to occur on release of ADP. The chain is Dynein beta chain, ciliary from Heliocidaris crassispina (Sea urchin).